Here is a 183-residue protein sequence, read N- to C-terminus: MMSKQLTAQAPVDPIVLGKMGSSYGIRGWLRVFSSTEDAESIFDYQPWFIQKAGQWQQVQLESWKHHNQDMIIKLKGVDDRDAANLLTNCEIVVDSSQLPQLEEGDYYWKDLMGCQVVTTEGYDLGKVVDMMETGSNDVLVIKANLKDAFGIKERLVPFLDGQVIKKVDLTTRSIEVDWDPGF.

Residues 103-183 (EEGDYYWKDL…SIEVDWDPGF (81 aa)) enclose the PRC barrel domain.

It belongs to the RimM family. In terms of assembly, binds ribosomal protein uS19.

It localises to the cytoplasm. Its function is as follows. An accessory protein needed during the final step in the assembly of 30S ribosomal subunit, possibly for assembly of the head region. Essential for efficient processing of 16S rRNA. May be needed both before and after RbfA during the maturation of 16S rRNA. It has affinity for free ribosomal 30S subunits but not for 70S ribosomes. This is Ribosome maturation factor RimM from Escherichia coli O157:H7 (strain EC4115 / EHEC).